We begin with the raw amino-acid sequence, 459 residues long: 23S rRNA (uracil-C(5))-methyltransferase RlmCD (459 aa).

The region spanning 6–64 (PVEKNEYYDVTFEDLTHEGAGVAKVQGFPIFVPNALPEEKAQIKVTRVKKGFAFGRLIE) is the TRAM domain. [4Fe-4S] cluster contacts are provided by C77, C83, C86, and C166. Positions 290, 319, 340, and 388 each coordinate S-adenosyl-L-methionine. Residue C415 is the Nucleophile of the active site.

Belongs to the class I-like SAM-binding methyltransferase superfamily. RNA M5U methyltransferase family.

The enzyme catalyses uridine(747) in 23S rRNA + S-adenosyl-L-methionine = 5-methyluridine(747) in 23S rRNA + S-adenosyl-L-homocysteine + H(+). The catalysed reaction is uridine(1939) in 23S rRNA + S-adenosyl-L-methionine = 5-methyluridine(1939) in 23S rRNA + S-adenosyl-L-homocysteine + H(+). In terms of biological role, catalyzes the formation of 5-methyl-uridine at positions 747 (m5U747) and 1939 (m5U1939) in 23S rRNA. This is 23S rRNA (uracil-C(5))-methyltransferase RlmCD (rlmCD) from Bacillus subtilis (strain 168).